Here is a 178-residue protein sequence, read N- to C-terminus: Ribosome maturation factor RimM (178 aa).

The PRC barrel domain maps to 101–178 (ADEYYWYQLE…VMRVEWDADF (78 aa)).

It belongs to the RimM family. In terms of assembly, binds ribosomal protein uS19.

The protein localises to the cytoplasm. In terms of biological role, an accessory protein needed during the final step in the assembly of 30S ribosomal subunit, possibly for assembly of the head region. Essential for efficient processing of 16S rRNA. May be needed both before and after RbfA during the maturation of 16S rRNA. It has affinity for free ribosomal 30S subunits but not for 70S ribosomes. The protein is Ribosome maturation factor RimM of Pseudomonas fluorescens (strain Pf0-1).